Here is a 470-residue protein sequence, read N- to C-terminus: MDASLITEIRKIVLQLSVSSNGSQSKEIEEIKKQVQVNVDDIRAANIKLDGLGRQIADISNSISTIESRLGEMDNRLVGISSQVTQLSNSVSQNTQSISSLGDRINAVEPRVDSLDTVTSNLTGRTSTLEADVGSLRTELAALTTRVTTEVTRLDGLINSGQNSIGELSTRLSNVETSMVTTAGRGLQKNGNTLNVIVGNGMWFNSSNQLQLDLSGQSKGVGFVGTGMVVKIDTNYFAYNSNGEITLVSQINELPSRVSTLESAKIDSVLPPLTVREASGVRTLSFGYDTSDFTIINSVLSLRSRLTLPTYRYPLELDTANNRVQVADRFGMRTGTWTGQLQYQHPQLSWRANVTLNLMKVDDWLVLSFSQMTTNSIMADGKFVINFVSGLSSGWQTGDTEPSSTIDPLSTTFAAVQFLNNGQRIDAFRIMGVSEWTDGELEIKNYGGTYTGHTQVYWAPWTIMYPCNVR.

Positions 1–324 (MDASLITEIR…LELDTANNRV (324 aa)) are tail. N-linked (GlcNAc...) asparagine; by host glycosylation occurs at asparagine 21. Residues 26-46 (KEIEEIKKQVQVNVDDIRAAN) adopt a coiled-coil conformation. N-linked (GlcNAc...) asparagine; by host glycosylation is found at asparagine 121, asparagine 205, and asparagine 353. A head region spans residues 325 to 470 (QVADRFGMRT…WTIMYPCNVR (146 aa)).

It belongs to the orthoreovirus sigma-1 protein family. Homotrimer. Interacts (via the head region) with human F11R. In terms of processing, undergoes dramatic conformational rearrangements during viral disassembly in the endocytic pathway.

The protein localises to the virion. In terms of biological role, fiber-like molecule that attaches the virion to the host cell membrane by binding to the primary receptor F11R/JAM-A and to sialic acid containing proteins (coreceptor). The interaction of sigma-1 with F11R is required for NF-kB activation and apoptosis. Binding to both sialic acid and F11R is required to induce maximal levels of apoptosis. The sequence is that of Outer capsid protein sigma-1 (S1) from Reovirus type 1 (strain Lang) (T1L).